Here is a 445-residue protein sequence, read N- to C-terminus: Probable D-serine dehydratase (445 aa).

K111 carries the N6-(pyridoxal phosphate)lysine modification.

It belongs to the serine/threonine dehydratase family. DsdA subfamily. Pyridoxal 5'-phosphate serves as cofactor.

It catalyses the reaction D-serine = pyruvate + NH4(+). The chain is Probable D-serine dehydratase from Burkholderia pseudomallei (strain 668).